Here is a 304-residue protein sequence, read N- to C-terminus: 3-diazoavenalumate denitrifying reductase (304 aa).

This sequence belongs to the NAD(P)-dependent epimerase/dehydratase family.

The catalysed reaction is 3-diazoavenalumate + NADPH + H(+) = avenalumate + N2 + NADP(+). It catalyses the reaction 3-diazoavenalumate + NADH + H(+) = avenalumate + N2 + NAD(+). It carries out the reaction (E)-3-diazocoumarate + NADPH = N2 + (E)-4-coumarate + NADP(+). The enzyme catalyses (E)-3-diazocoumarate + NADH = N2 + (E)-4-coumarate + NAD(+). Functionally, oxidoreductase involved in the biosynthesis of avenalumic acid (AVA). Catalyzes the denitrification of 3-diazoavenalumic acid (3-DAA) to produce AVA. It can also act on 3-diazocoumaric acid (3-DCA). Can use NADPH or NADH as a reductant, with a preference for NADPH. The protein is 3-diazoavenalumate denitrifying reductase of Streptomyces sp.